The chain runs to 171 residues: Protein GrpE (171 aa).

The segment at 1 to 22 (MNHEQPDIESQQSAADAAATAG) is disordered.

It belongs to the GrpE family. As to quaternary structure, homodimer.

It is found in the cytoplasm. In terms of biological role, participates actively in the response to hyperosmotic and heat shock by preventing the aggregation of stress-denatured proteins, in association with DnaK and GrpE. It is the nucleotide exchange factor for DnaK and may function as a thermosensor. Unfolded proteins bind initially to DnaJ; upon interaction with the DnaJ-bound protein, DnaK hydrolyzes its bound ATP, resulting in the formation of a stable complex. GrpE releases ADP from DnaK; ATP binding to DnaK triggers the release of the substrate protein, thus completing the reaction cycle. Several rounds of ATP-dependent interactions between DnaJ, DnaK and GrpE are required for fully efficient folding. This chain is Protein GrpE, found in Stenotrophomonas maltophilia (strain K279a).